The chain runs to 268 residues: Expansin-B3 (268 aa).

A signal peptide spans 1 to 25 (MAFSISKKAAVAALFSFLVVTCVAG). Asn30 carries an N-linked (GlcNAc...) asparagine glycan. Residues 62–168 (GGACGFKNTN…KRVPCNFPGL (107 aa)) enclose the Expansin-like EG45 domain. Intrachain disulfides connect Cys65-Cys93, Cys96-Cys163, and Cys101-Cys107. The region spanning 181–262 (VYFAVLVEYE…NWAPMAVYRS (82 aa)) is the Expansin-like CBD domain. N-linked (GlcNAc...) asparagine glycosylation is present at Asn238.

This sequence belongs to the expansin family. Expansin B subfamily. As to expression, expressed in roots, coleoptiles and internodes.

The protein localises to the secreted. It is found in the cell wall. It localises to the membrane. May cause loosening and extension of plant cell walls by disrupting non-covalent bonding between cellulose microfibrils and matrix glucans. No enzymatic activity has been found. May be required for rapid internodal elongation in deepwater rice during submergence. The chain is Expansin-B3 (EXPB3) from Oryza sativa subsp. japonica (Rice).